Here is a 398-residue protein sequence, read N- to C-terminus: Phosphoglycerate kinase (398 aa).

Substrate contacts are provided by residues 21-23, Arg36, 59-62, Arg119, and Arg157; these read DFN and HLGR. ATP is bound by residues Lys208, Gly296, Glu327, and 354–357; that span reads GGDS.

It belongs to the phosphoglycerate kinase family. As to quaternary structure, monomer.

The protein localises to the cytoplasm. It carries out the reaction (2R)-3-phosphoglycerate + ATP = (2R)-3-phospho-glyceroyl phosphate + ADP. It functions in the pathway carbohydrate degradation; glycolysis; pyruvate from D-glyceraldehyde 3-phosphate: step 2/5. This chain is Phosphoglycerate kinase, found in Streptococcus pneumoniae serotype 19F (strain G54).